The following is a 603-amino-acid chain: uncharacterized protein (603 aa).

The PE domain occupies 1–93 (MSFVIAAPET…AGAYASAEAA (93 aa)). A disordered region spans residues 309–333 (GIFTGNGGTGGTGGTGTGNQLVGGE).

This sequence belongs to the mycobacterial PE family. PGRS subfamily.

This is an uncharacterized protein from Mycobacterium tuberculosis (strain CDC 1551 / Oshkosh).